A 149-amino-acid polypeptide reads, in one-letter code: UPF0179 protein rrnAC1064 (149 aa).

This sequence belongs to the UPF0179 family.

In Haloarcula marismortui (strain ATCC 43049 / DSM 3752 / JCM 8966 / VKM B-1809) (Halobacterium marismortui), this protein is UPF0179 protein rrnAC1064.